Reading from the N-terminus, the 105-residue chain is POU domain, class 3, transcription factor 3 (105 aa).

Residues 1–49 (QADVGLALGTLYGNVFSQTTICRFEALQLSFKNMCKLKPLLNKWLEEAD) enclose the POU-specific domain. Positions 67–105 (KRKKRTSIEVSVKGALESHFLKCPKPAAQEITTLADSLQ) form a DNA-binding region, homeobox.

Belongs to the POU transcription factor family. Class-3 subfamily.

The protein localises to the nucleus. This chain is POU domain, class 3, transcription factor 3 (pou3f3), found in Xenopus laevis (African clawed frog).